Consider the following 174-residue polypeptide: ATP-dependent protease subunit HslV (174 aa).

Thr-4 is an active-site residue. Residues Ala-159, Cys-162, and Thr-165 each coordinate Na(+).

This sequence belongs to the peptidase T1B family. HslV subfamily. In terms of assembly, a double ring-shaped homohexamer of HslV is capped on each side by a ring-shaped HslU homohexamer. The assembly of the HslU/HslV complex is dependent on binding of ATP.

Its subcellular location is the cytoplasm. The enzyme catalyses ATP-dependent cleavage of peptide bonds with broad specificity.. With respect to regulation, allosterically activated by HslU binding. Its function is as follows. Protease subunit of a proteasome-like degradation complex believed to be a general protein degrading machinery. The chain is ATP-dependent protease subunit HslV from Moorella thermoacetica (strain ATCC 39073 / JCM 9320).